Consider the following 84-residue polypeptide: Beta-cardiotoxin CTX27 (84 aa).

An N-terminal signal peptide occupies residues 1–21; the sequence is MKTLLLTLVVVTIVCLDLGYT. 4 disulfides stabilise this stretch: Cys24–Cys43, Cys36–Cys61, Cys65–Cys76, and Cys77–Cys82.

It belongs to the three-finger toxin family. Short-chain subfamily. Aminergic toxin sub-subfamily. As to expression, expressed by the venom gland.

The protein resides in the secreted. Acts as a beta-blocker by binding to beta-1 and beta-2 adrenergic receptors (ADRB1 and ADRB2). It dose-dependently decreases the heart rate (bradycardia), whereas conventional cardiotoxins increases it. At 100 mg/kg, intraperitoneal injection into mice provokes labored breathing, impaired locomotion, lack of response to external stimuli, and death (after 30 minutes). The polypeptide is Beta-cardiotoxin CTX27 (Ophiophagus hannah (King cobra)).